A 200-amino-acid chain; its full sequence is NAD(P)H dehydrogenase (quinone) (200 aa).

The Flavodoxin-like domain maps to 4–191; the sequence is VLVLYYSSYG…DIARYQGKHV (188 aa). FMN is bound by residues 10–15 and 79–81; these read SSYGHV and TRF. Residue tyrosine 12 coordinates NAD(+). Residue tryptophan 99 coordinates substrate. FMN-binding positions include 114–120 and histidine 135; that span reads STGTQHG.

It belongs to the WrbA family. FMN serves as cofactor.

It carries out the reaction a quinone + NADH + H(+) = a quinol + NAD(+). It catalyses the reaction a quinone + NADPH + H(+) = a quinol + NADP(+). This Burkholderia cenocepacia (strain ATCC BAA-245 / DSM 16553 / LMG 16656 / NCTC 13227 / J2315 / CF5610) (Burkholderia cepacia (strain J2315)) protein is NAD(P)H dehydrogenase (quinone).